The primary structure comprises 161 residues: 3-isopropylmalate dehydratase small subunit 1 (161 aa).

The protein belongs to the LeuD family. LeuD type 2 subfamily. As to quaternary structure, heterodimer of LeuC and LeuD.

It carries out the reaction (2R,3S)-3-isopropylmalate = (2S)-2-isopropylmalate. It functions in the pathway amino-acid biosynthesis; L-leucine biosynthesis; L-leucine from 3-methyl-2-oxobutanoate: step 2/4. Functionally, catalyzes the isomerization between 2-isopropylmalate and 3-isopropylmalate, via the formation of 2-isopropylmaleate. The sequence is that of 3-isopropylmalate dehydratase small subunit 1 (leuD1) from Archaeoglobus fulgidus (strain ATCC 49558 / DSM 4304 / JCM 9628 / NBRC 100126 / VC-16).